The primary structure comprises 181 residues: Putative J domain-containing protein R266 (181 aa).

A J domain is found at 6–70 (NYYQILDVDN…LKRLNYDSYL (65 aa)).

This chain is Putative J domain-containing protein R266, found in Acanthamoeba polyphaga (Amoeba).